We begin with the raw amino-acid sequence, 336 residues long: DNA-directed RNA polymerase subunit alpha (336 aa).

The alpha N-terminal domain (alpha-NTD) stretch occupies residues 1 to 226 (MLIAQRPTLS…ELFGLARELN (226 aa)). The tract at residues 241–336 (AALAADMALP…DDAAFSDDEL (96 aa)) is alpha C-terminal domain (alpha-CTD).

It belongs to the RNA polymerase alpha chain family. In terms of assembly, homodimer. The RNAP catalytic core consists of 2 alpha, 1 beta, 1 beta' and 1 omega subunit. When a sigma factor is associated with the core the holoenzyme is formed, which can initiate transcription.

The catalysed reaction is RNA(n) + a ribonucleoside 5'-triphosphate = RNA(n+1) + diphosphate. DNA-dependent RNA polymerase catalyzes the transcription of DNA into RNA using the four ribonucleoside triphosphates as substrates. This Arthrobacter sp. (strain FB24) protein is DNA-directed RNA polymerase subunit alpha.